Consider the following 74-residue polypeptide: Alpha-elapitoxin-Aa2d (74 aa).

5 disulfides stabilise this stretch: Cys3-Cys21, Cys14-Cys42, Cys27-Cys31, Cys46-Cys57, and Cys58-Cys63.

Belongs to the three-finger toxin family. Long-chain subfamily. Type II alpha-neurotoxin sub-subfamily. As to expression, expressed by the venom gland.

It localises to the secreted. In terms of biological role, binds with high affinity to muscular (alpha-1/CHRNA1) and neuronal (alpha-7/CHRNA7) nicotinic acetylcholine receptor (nAChR) and inhibits acetylcholine from binding to the receptor, thereby impairing neuromuscular and neuronal transmission. The protein is Alpha-elapitoxin-Aa2d of Acanthophis antarcticus (Common death adder).